The chain runs to 351 residues: DNA polymerase IV (351 aa).

The UmuC domain maps to 4 to 185; it reads IIHIDMDCFY…LPLRKIPGVG (182 aa). Mg(2+)-binding residues include Asp8 and Asp103. Residue Glu104 is part of the active site.

The protein belongs to the DNA polymerase type-Y family. Monomer. The cofactor is Mg(2+).

Its subcellular location is the cytoplasm. It catalyses the reaction DNA(n) + a 2'-deoxyribonucleoside 5'-triphosphate = DNA(n+1) + diphosphate. In terms of biological role, poorly processive, error-prone DNA polymerase involved in untargeted mutagenesis. Copies undamaged DNA at stalled replication forks, which arise in vivo from mismatched or misaligned primer ends. These misaligned primers can be extended by PolIV. Exhibits no 3'-5' exonuclease (proofreading) activity. May be involved in translesional synthesis, in conjunction with the beta clamp from PolIII. The protein is DNA polymerase IV of Photorhabdus laumondii subsp. laumondii (strain DSM 15139 / CIP 105565 / TT01) (Photorhabdus luminescens subsp. laumondii).